The primary structure comprises 750 residues: Phosphoribosylformylglycinamidine synthase subunit PurL (750 aa).

The active site involves His-54. The ATP site is built by Tyr-57 and Lys-101. Glu-103 contributes to the Mg(2+) binding site. Residues 104–107 (SHNH) and Arg-126 each bind substrate. His-105 (proton acceptor) is an active-site residue. Position 127 (Asp-127) interacts with Mg(2+). Gln-251 contacts substrate. Mg(2+) is bound at residue Asp-279. 323–325 (ESQ) is a binding site for substrate. ATP-binding residues include Asp-509 and Gly-546. Asn-547 is a binding site for Mg(2+). Residue Ser-549 coordinates substrate.

Belongs to the FGAMS family. As to quaternary structure, monomer. Part of the FGAM synthase complex composed of 1 PurL, 1 PurQ and 2 PurS subunits.

It is found in the cytoplasm. It carries out the reaction N(2)-formyl-N(1)-(5-phospho-beta-D-ribosyl)glycinamide + L-glutamine + ATP + H2O = 2-formamido-N(1)-(5-O-phospho-beta-D-ribosyl)acetamidine + L-glutamate + ADP + phosphate + H(+). It participates in purine metabolism; IMP biosynthesis via de novo pathway; 5-amino-1-(5-phospho-D-ribosyl)imidazole from N(2)-formyl-N(1)-(5-phospho-D-ribosyl)glycinamide: step 1/2. Its function is as follows. Part of the phosphoribosylformylglycinamidine synthase complex involved in the purines biosynthetic pathway. Catalyzes the ATP-dependent conversion of formylglycinamide ribonucleotide (FGAR) and glutamine to yield formylglycinamidine ribonucleotide (FGAM) and glutamate. The FGAM synthase complex is composed of three subunits. PurQ produces an ammonia molecule by converting glutamine to glutamate. PurL transfers the ammonia molecule to FGAR to form FGAM in an ATP-dependent manner. PurS interacts with PurQ and PurL and is thought to assist in the transfer of the ammonia molecule from PurQ to PurL. The polypeptide is Phosphoribosylformylglycinamidine synthase subunit PurL (Cutibacterium acnes (strain DSM 16379 / KPA171202) (Propionibacterium acnes)).